Here is a 1098-residue protein sequence, read N- to C-terminus: Tudor domain-containing protein 7 (1098 aa).

The HTH OST-type 1 domain occupies 3–76; sequence EGDLVSKMLR…SGEITCYAMA (74 aa). The disordered stretch occupies residues 129-156; sequence ASNFSVGKKPNPAPLRDKGNSVGVKPDA. Residues 233–302 form the HTH OST-type 2 domain; that stretch reads KMDEVQNRIK…GQDLLLYPAK (70 aa). Position 319 is a phosphoserine (S319). Residues 337–406 form the HTH OST-type 3 domain; sequence MAGDFKEKVA…PQKAILYAKL (70 aa). 2 Tudor domains span residues 513–570 and 703–760; these read AVNV…FCSL and LPFC…FLQE. The tract at residues 855–874 is disordered; it reads SGADSPNSKNGNMPMSGNTG. S859 carries the post-translational modification Phosphoserine. The segment at 861–1098 is interaction with CDK17; it reads NSKNGNMPMS…EYLIELSKVN (238 aa). An interaction with CABLES1 region spans residues 893-1098; sequence TSAFSTEELP…EYLIELSKVN (206 aa).

Belongs to the TDRD7 family. As to quaternary structure, found in a mRNP complex, at least composed of TDRD1, TDRD6, TDRD7 and DDX4. Found in a complex containing CABLES1, CDK16 and CDK17. Interacts with CABLES1, CDK17 and PIWIL1.

It localises to the cytoplasm. In terms of biological role, component of specific cytoplasmic RNA granules involved in post-transcriptional regulation of specific genes: probably acts by binding to specific mRNAs and regulating their translation. Required for lens transparency during lens development, by regulating translation of genes such as CRYBB3 and HSPB1 in the developing lens. Also required during spermatogenesis. This is Tudor domain-containing protein 7 (TDRD7) from Homo sapiens (Human).